The chain runs to 726 residues: Putative tyrosine-protein kinase AmsA (726 aa).

The next 2 membrane-spanning stretches (helical) occupy residues 32–52 and 425–445; these read WMIV…SLFA and ILIV…LVLM.

Belongs to the etk/wzc family.

The protein localises to the cell inner membrane. It catalyses the reaction L-tyrosyl-[protein] + ATP = O-phospho-L-tyrosyl-[protein] + ADP + H(+). Its pathway is glycan metabolism; exopolysaccharide biosynthesis. In terms of biological role, involved in the biosynthesis of amylovoran which functions as a virulence factor. This is Putative tyrosine-protein kinase AmsA (amsA) from Erwinia amylovora (Fire blight bacteria).